Consider the following 294-residue polypeptide: Major pollen allergen Pha a 5.3 (294 aa).

The signal sequence occupies residues 1-25 (MAVQKYTVALFLAMALVAGPAASYA).

It belongs to the Poa p IX/Phl p VI allergen family.

In Phalaris aquatica (Canary grass), this protein is Major pollen allergen Pha a 5.3.